A 204-amino-acid chain; its full sequence is Somatotropin (204 aa).

An N-terminal signal peptide occupies residues 1-17 (MNSVVLQLSVVCLGVSS). Residue glutamine 18 is modified to Pyrrolidone carboxylic acid. Histidine 36 contacts Zn(2+). The cysteines at positions 69 and 177 are disulfide-linked. A Zn(2+)-binding site is contributed by glutamate 186. An intrachain disulfide couples cysteine 194 to cysteine 202.

Belongs to the somatotropin/prolactin family.

Its subcellular location is the secreted. Growth hormone plays an important role in growth control and involved in the regulation of several anabolic processes. This is Somatotropin (gh) from Oreochromis mossambicus (Mozambique tilapia).